Here is a 266-residue protein sequence, read N- to C-terminus: Proteasome subunit beta type-7 (266 aa).

Residues 1 to 34 (MENLNRGGFDFDLCNRNNVLEKTGLRMKGFMKTG) constitute a propeptide, removed in mature form. Thr35 serves as the catalytic Nucleophile.

It belongs to the peptidase T1B family. As to quaternary structure, the 26S proteasome consists of a 20S proteasome core and two 19S regulatory subunits. The 20S proteasome core is composed of 28 subunits that are arranged in four stacked rings, resulting in a barrel-shaped structure. The two end rings are each formed by seven alpha subunits, and the two central rings are each formed by seven beta subunits. The catalytic chamber with the active sites is on the inside of the barrel.

The protein resides in the cytoplasm. The protein localises to the nucleus. It catalyses the reaction Cleavage of peptide bonds with very broad specificity.. The proteasome is a multicatalytic proteinase complex which is characterized by its ability to cleave peptides with Arg, Phe, Tyr, Leu, and Glu adjacent to the leaving group at neutral or slightly basic pH. The proteasome has an ATP-dependent proteolytic activity. The chain is Proteasome subunit beta type-7 (psmB7) from Dictyostelium discoideum (Social amoeba).